A 291-amino-acid chain; its full sequence is Phosphatidylserine decarboxylase proenzyme (291 aa).

Active-site charge relay system; for autoendoproteolytic cleavage activity residues include aspartate 90, histidine 147, and serine 253. Serine 253 (schiff-base intermediate with substrate; via pyruvic acid; for decarboxylase activity) is an active-site residue. Serine 253 is subject to Pyruvic acid (Ser); by autocatalysis.

The protein belongs to the phosphatidylserine decarboxylase family. PSD-B subfamily. Prokaryotic type I sub-subfamily. Heterodimer of a large membrane-associated beta subunit and a small pyruvoyl-containing alpha subunit. The cofactor is pyruvate. Post-translationally, is synthesized initially as an inactive proenzyme. Formation of the active enzyme involves a self-maturation process in which the active site pyruvoyl group is generated from an internal serine residue via an autocatalytic post-translational modification. Two non-identical subunits are generated from the proenzyme in this reaction, and the pyruvate is formed at the N-terminus of the alpha chain, which is derived from the carboxyl end of the proenzyme. The autoendoproteolytic cleavage occurs by a canonical serine protease mechanism, in which the side chain hydroxyl group of the serine supplies its oxygen atom to form the C-terminus of the beta chain, while the remainder of the serine residue undergoes an oxidative deamination to produce ammonia and the pyruvoyl prosthetic group on the alpha chain. During this reaction, the Ser that is part of the protease active site of the proenzyme becomes the pyruvoyl prosthetic group, which constitutes an essential element of the active site of the mature decarboxylase.

The protein localises to the cell membrane. It carries out the reaction a 1,2-diacyl-sn-glycero-3-phospho-L-serine + H(+) = a 1,2-diacyl-sn-glycero-3-phosphoethanolamine + CO2. Its pathway is phospholipid metabolism; phosphatidylethanolamine biosynthesis; phosphatidylethanolamine from CDP-diacylglycerol: step 2/2. In terms of biological role, catalyzes the formation of phosphatidylethanolamine (PtdEtn) from phosphatidylserine (PtdSer). The polypeptide is Phosphatidylserine decarboxylase proenzyme (Photobacterium profundum (strain SS9)).